Here is a 151-residue protein sequence, read N- to C-terminus: Large ribosomal subunit protein uL15 (151 aa).

It belongs to the universal ribosomal protein uL15 family. As to quaternary structure, part of the 50S ribosomal subunit.

Functionally, binds to the 23S rRNA. The protein is Large ribosomal subunit protein uL15 of Hyperthermus butylicus (strain DSM 5456 / JCM 9403 / PLM1-5).